Here is a 122-residue protein sequence, read N- to C-terminus: Large ribosomal subunit protein uL14 (122 aa).

The protein belongs to the universal ribosomal protein uL14 family. Part of the 50S ribosomal subunit. Forms a cluster with proteins L3 and L19. In the 70S ribosome, L14 and L19 interact and together make contacts with the 16S rRNA in bridges B5 and B8.

Functionally, binds to 23S rRNA. Forms part of two intersubunit bridges in the 70S ribosome. This is Large ribosomal subunit protein uL14 from Desulforapulum autotrophicum (strain ATCC 43914 / DSM 3382 / VKM B-1955 / HRM2) (Desulfobacterium autotrophicum).